Reading from the N-terminus, the 1242-residue chain is Phosphorylase b kinase regulatory subunit alpha, skeletal muscle isoform (1242 aa).

Phosphoserine is present on residues Ser-630, Ser-731, Ser-737, Ser-740, Ser-760, Ser-813, Ser-974, Ser-983, and Ser-987. Residues 812 to 842 (LSELYVKVGEIRHWGLIRYISGILRKKVEAL) form a calmodulin-binding region. At Ser-1009 the chain carries Phosphoserine; by autocatalysis. Ser-1020 is subject to Phosphoserine; by PKA. Residues Ser-1022 and Ser-1025 each carry the phosphoserine modification. The calmodulin-binding stretch occupies residues 1065–1105 (SKDSRQGQWQRRRRLDGALNRVPIGFYQKVWKILQKCHGLS). Ser-1132 carries the phosphoserine modification. Cys-1239 carries the S-farnesyl cysteine lipid modification.

This sequence belongs to the phosphorylase b kinase regulatory chain family. As to quaternary structure, hexadecamer of 4 heterotetramers, each composed of alpha, beta, gamma, and delta subunits. Alpha (PHKA1 or PHKA2) and beta (PHKB) are regulatory subunits, gamma (PHKG1 or PHKG2) is the catalytic subunit, and delta is calmodulin. Post-translationally, although the final Cys may be farnesylated, the terminal tripeptide is probably not removed, and the C-terminus is not methylated.

It is found in the cell membrane. Its pathway is glycan biosynthesis; glycogen metabolism. Its activity is regulated as follows. By phosphorylation of various serine residues and by calcium. Its function is as follows. Phosphorylase b kinase catalyzes the phosphorylation of serine in certain substrates, including troponin I. The alpha chain may bind calmodulin. This chain is Phosphorylase b kinase regulatory subunit alpha, skeletal muscle isoform (Phka1), found in Rattus norvegicus (Rat).